We begin with the raw amino-acid sequence, 137 residues long: Large ribosomal subunit protein uL16 (137 aa).

This sequence belongs to the universal ribosomal protein uL16 family. Part of the 50S ribosomal subunit.

Its function is as follows. Binds 23S rRNA and is also seen to make contacts with the A and possibly P site tRNAs. This is Large ribosomal subunit protein uL16 from Allorhizobium ampelinum (strain ATCC BAA-846 / DSM 112012 / S4) (Agrobacterium vitis (strain S4)).